The chain runs to 120 residues: NAD(P)H-quinone oxidoreductase subunit 3 (120 aa).

A run of 3 helical transmembrane segments spans residues 1 to 21 (MFVLSGYEYLLGFLIICSLVP), 64 to 84 (MFALVFVVFDVETVFLYPWAV), and 89 to 109 (LGLLAFIEALIFIAILVVALV).

This sequence belongs to the complex I subunit 3 family. As to quaternary structure, NDH-1 can be composed of about 15 different subunits; different subcomplexes with different compositions have been identified which probably have different functions.

Its subcellular location is the cellular thylakoid membrane. The enzyme catalyses a plastoquinone + NADH + (n+1) H(+)(in) = a plastoquinol + NAD(+) + n H(+)(out). The catalysed reaction is a plastoquinone + NADPH + (n+1) H(+)(in) = a plastoquinol + NADP(+) + n H(+)(out). In terms of biological role, NDH-1 shuttles electrons from an unknown electron donor, via FMN and iron-sulfur (Fe-S) centers, to quinones in the respiratory and/or the photosynthetic chain. The immediate electron acceptor for the enzyme in this species is believed to be plastoquinone. Couples the redox reaction to proton translocation, and thus conserves the redox energy in a proton gradient. Cyanobacterial NDH-1 also plays a role in inorganic carbon-concentration. The protein is NAD(P)H-quinone oxidoreductase subunit 3 of Trichormus variabilis (strain ATCC 29413 / PCC 7937) (Anabaena variabilis).